A 170-amino-acid polypeptide reads, in one-letter code: Phosphopantetheine adenylyltransferase (170 aa).

Threonine 18 is a substrate binding site. ATP is bound by residues threonine 18–phenylalanine 19 and histidine 26. Substrate-binding residues include lysine 50, leucine 84, and arginine 98. ATP-binding positions include glycine 99–arginine 101, glutamate 109, and tryptophan 134–serine 140.

This sequence belongs to the bacterial CoaD family. In terms of assembly, homohexamer. It depends on Mg(2+) as a cofactor.

The protein localises to the cytoplasm. The enzyme catalyses (R)-4'-phosphopantetheine + ATP + H(+) = 3'-dephospho-CoA + diphosphate. The protein operates within cofactor biosynthesis; coenzyme A biosynthesis; CoA from (R)-pantothenate: step 4/5. Its function is as follows. Reversibly transfers an adenylyl group from ATP to 4'-phosphopantetheine, yielding dephospho-CoA (dPCoA) and pyrophosphate. The chain is Phosphopantetheine adenylyltransferase from Desulfotalea psychrophila (strain LSv54 / DSM 12343).